The following is a 630-amino-acid chain: tRNA uridine 5-carboxymethylaminomethyl modification enzyme MnmG (630 aa).

13 to 18 (GGGHAG) contributes to the FAD binding site. 273-287 (GPRYCPSIEDKVMRF) is an NAD(+) binding site.

It belongs to the MnmG family. As to quaternary structure, homodimer. Heterotetramer of two MnmE and two MnmG subunits. It depends on FAD as a cofactor.

It is found in the cytoplasm. Functionally, NAD-binding protein involved in the addition of a carboxymethylaminomethyl (cmnm) group at the wobble position (U34) of certain tRNAs, forming tRNA-cmnm(5)s(2)U34. The sequence is that of tRNA uridine 5-carboxymethylaminomethyl modification enzyme MnmG from Actinobacillus pleuropneumoniae serotype 3 (strain JL03).